Reading from the N-terminus, the 199-residue chain is NAD(P)H dehydrogenase (quinone) (199 aa).

The Flavodoxin-like domain maps to 4–190 (VLVLYHSMYG…AIARFQGKHV (187 aa)). Residues 10–15 (SMYGHI) and 79–81 (TRF) each bind FMN. Y12 lines the NAD(+) pocket. W99 serves as a coordination point for substrate. H134 is a binding site for FMN.

The protein belongs to the WrbA family. Requires FMN as cofactor.

The enzyme catalyses a quinone + NADH + H(+) = a quinol + NAD(+). It carries out the reaction a quinone + NADPH + H(+) = a quinol + NADP(+). This chain is NAD(P)H dehydrogenase (quinone), found in Tolumonas auensis (strain DSM 9187 / NBRC 110442 / TA 4).